The sequence spans 302 residues: Spermidine synthase (302 aa).

The residue at position 1 (methionine 1) is an N-acetylmethionine. Positions 18–253 (EGWFRETCSL…GQIGFMLCSK (236 aa)) constitute a PABS domain. Glutamine 49 contributes to the S-adenosyl 3-(methylsulfanyl)propylamine binding site. A putrescine-binding site is contributed by tyrosine 79. Residues glutamine 80, aspartate 104, glutamate 124, 155–156 (DG), and aspartate 173 contribute to the S-adenosyl 3-(methylsulfanyl)propylamine site. Aspartate 173 acts as the Proton acceptor in catalysis. Residues 173–176 (DSSD) and tyrosine 241 each bind putrescine.

It belongs to the spermidine/spermine synthase family. As to quaternary structure, homodimer or homotetramer.

The enzyme catalyses S-adenosyl 3-(methylsulfanyl)propylamine + putrescine = S-methyl-5'-thioadenosine + spermidine + H(+). It participates in amine and polyamine biosynthesis; spermidine biosynthesis; spermidine from putrescine: step 1/1. With respect to regulation, the activity is thought to be regulated mainly by the availability of decarboxylated S-adenosylmethionine. Its function is as follows. Catalyzes the production of spermidine from putrescine and decarboxylated S-adenosylmethionine (dcSAM). Has a strong preference for putrescine as substrate, and has very low activity towards 1,3-diaminopropane. Has extremely low activity towards spermidine. The polypeptide is Spermidine synthase (SRM) (Homo sapiens (Human)).